A 260-amino-acid polypeptide reads, in one-letter code: Indole-3-glycerol phosphate synthase (260 aa).

The protein belongs to the TrpC family.

The enzyme catalyses 1-(2-carboxyphenylamino)-1-deoxy-D-ribulose 5-phosphate + H(+) = (1S,2R)-1-C-(indol-3-yl)glycerol 3-phosphate + CO2 + H2O. It participates in amino-acid biosynthesis; L-tryptophan biosynthesis; L-tryptophan from chorismate: step 4/5. This is Indole-3-glycerol phosphate synthase from Leifsonia xyli subsp. xyli (strain CTCB07).